A 74-amino-acid chain; its full sequence is Large ribosomal subunit protein bL31 (74 aa).

4 residues coordinate Zn(2+): C16, C18, C38, and C41.

It belongs to the bacterial ribosomal protein bL31 family. Type A subfamily. Part of the 50S ribosomal subunit. The cofactor is Zn(2+).

Its function is as follows. Binds the 23S rRNA. This chain is Large ribosomal subunit protein bL31, found in Acinetobacter baumannii (strain AB307-0294).